Here is a 141-residue protein sequence, read N- to C-terminus: Hemoglobin subunit alpha (141 aa).

The region spanning 1 to 141 (VLSPADKTNV…VSTVLTSKYR (141 aa)) is the Globin domain. Residue S3 is modified to Phosphoserine. Residue K7 is modified to N6-succinyllysine. Position 8 is a phosphothreonine (T8). N6-succinyllysine is present on K11. The residue at position 16 (K16) is an N6-acetyllysine; alternate. K16 is modified (N6-succinyllysine; alternate). The residue at position 24 (Y24) is a Phosphotyrosine. S35 carries the phosphoserine modification. Position 40 is an N6-succinyllysine (K40). S49 carries the phosphoserine modification. Position 58 (H58) interacts with O2. Residue H87 coordinates heme b. Position 102 is a phosphoserine (S102). T108 carries the post-translational modification Phosphothreonine. Phosphoserine occurs at positions 124 and 131. Phosphothreonine is present on residues T134 and T137. S138 is subject to Phosphoserine.

Belongs to the globin family. As to quaternary structure, heterotetramer of two alpha chains and two beta chains. As to expression, red blood cells.

Involved in oxygen transport from the lung to the various peripheral tissues. This chain is Hemoglobin subunit alpha, found in Otospermophilus beecheyi (California ground squirrel).